A 154-amino-acid chain; its full sequence is UPF0225 protein Asuc_0343 (154 aa).

It belongs to the UPF0225 family.

The protein is UPF0225 protein Asuc_0343 of Actinobacillus succinogenes (strain ATCC 55618 / DSM 22257 / CCUG 43843 / 130Z).